The chain runs to 91 residues: Probable Fe(2+)-trafficking protein (91 aa).

This sequence belongs to the Fe(2+)-trafficking protein family.

Functionally, could be a mediator in iron transactions between iron acquisition and iron-requiring processes, such as synthesis and/or repair of Fe-S clusters in biosynthetic enzymes. This chain is Probable Fe(2+)-trafficking protein, found in Burkholderia thailandensis (strain ATCC 700388 / DSM 13276 / CCUG 48851 / CIP 106301 / E264).